A 221-amino-acid polypeptide reads, in one-letter code: Iron-sulfur cluster repair protein YtfE (221 aa).

It belongs to the RIC family. YtfE subfamily. In terms of assembly, homodimer.

The protein resides in the cytoplasm. Functionally, di-iron-containing protein involved in the repair of iron-sulfur clusters damaged by oxidative and nitrosative stress conditions. In Yersinia pseudotuberculosis serotype IB (strain PB1/+), this protein is Iron-sulfur cluster repair protein YtfE.